Reading from the N-terminus, the 424-residue chain is Tyrosine--tRNA ligase (424 aa).

Tyr-37 provides a ligand contact to L-tyrosine. Positions 42–51 match the 'HIGH' region motif; that stretch reads PTADSLHLGH. N6-acetyllysine is present on Lys-144. 2 residues coordinate L-tyrosine: Tyr-175 and Gln-179. The 'KMSKS' region motif lies at 235–239; that stretch reads KFGKT. Lys-238 lines the ATP pocket. An S4 RNA-binding domain is found at 357–414; the sequence is ADLMQALVDSELQPSRGQARKTIASNAITINGEKQSDPEYFFKEEDRLFGRFTLLRRG.

This sequence belongs to the class-I aminoacyl-tRNA synthetase family. TyrS type 1 subfamily. As to quaternary structure, homodimer.

The protein resides in the cytoplasm. The catalysed reaction is tRNA(Tyr) + L-tyrosine + ATP = L-tyrosyl-tRNA(Tyr) + AMP + diphosphate + H(+). Its function is as follows. Catalyzes the attachment of tyrosine to tRNA(Tyr) in a two-step reaction: tyrosine is first activated by ATP to form Tyr-AMP and then transferred to the acceptor end of tRNA(Tyr). This Shigella flexneri serotype 5b (strain 8401) protein is Tyrosine--tRNA ligase.